The following is a 492-amino-acid chain: ATP synthase subunit beta, chloroplastic (492 aa).

Position 170 to 177 (170 to 177) interacts with ATP; sequence GGAGVGKT.

Belongs to the ATPase alpha/beta chains family. As to quaternary structure, F-type ATPases have 2 components, CF(1) - the catalytic core - and CF(0) - the membrane proton channel. CF(1) has five subunits: alpha(3), beta(3), gamma(1), delta(1), epsilon(1). CF(0) has four main subunits: a(1), b(1), b'(1) and c(9-12).

It localises to the plastid. The protein resides in the chloroplast thylakoid membrane. The enzyme catalyses ATP + H2O + 4 H(+)(in) = ADP + phosphate + 5 H(+)(out). Functionally, produces ATP from ADP in the presence of a proton gradient across the membrane. The catalytic sites are hosted primarily by the beta subunits. This is ATP synthase subunit beta, chloroplastic from Anthoceros angustus (Hornwort).